Reading from the N-terminus, the 207-residue chain is Ribonuclease HII (207 aa).

The RNase H type-2 domain occupies 12–201 (DLVAGVDEVG…VRAAWEAREG (190 aa)). Asp-18, Glu-19, and Asp-110 together coordinate a divalent metal cation.

Belongs to the RNase HII family. Mn(2+) is required as a cofactor. Mg(2+) serves as cofactor.

It localises to the cytoplasm. It carries out the reaction Endonucleolytic cleavage to 5'-phosphomonoester.. Functionally, endonuclease that specifically degrades the RNA of RNA-DNA hybrids. The chain is Ribonuclease HII from Pseudomonas putida (strain GB-1).